The chain runs to 315 residues: Protein phosphatase PTC7 homolog fig (315 aa).

In terms of domain architecture, PPM-type phosphatase spans 54–309; sequence KHSIASAKDN…DDITVILATV (256 aa). Mn(2+)-binding residues include Asp-86, Gly-87, and Asp-231.

Belongs to the PP2C family. The cofactor is Mg(2+). Mn(2+) is required as a cofactor.

The catalysed reaction is O-phospho-L-seryl-[protein] + H2O = L-seryl-[protein] + phosphate. It catalyses the reaction O-phospho-L-threonyl-[protein] + H2O = L-threonyl-[protein] + phosphate. In Drosophila willistoni (Fruit fly), this protein is Protein phosphatase PTC7 homolog fig.